A 338-amino-acid chain; its full sequence is Porphobilinogen deaminase (338 aa).

S-(dipyrrolylmethanemethyl)cysteine is present on C265.

Belongs to the HMBS family. Dipyrromethane is required as a cofactor.

It catalyses the reaction 4 porphobilinogen + H2O = hydroxymethylbilane + 4 NH4(+). It functions in the pathway porphyrin-containing compound metabolism; protoporphyrin-IX biosynthesis; coproporphyrinogen-III from 5-aminolevulinate: step 2/4. Its function is as follows. Tetrapolymerization of the monopyrrole PBG into the hydroxymethylbilane pre-uroporphyrinogen in several discrete steps. This chain is Porphobilinogen deaminase (HEM3), found in Yarrowia lipolytica (strain CLIB 122 / E 150) (Yeast).